A 345-amino-acid polypeptide reads, in one-letter code: Ferrochelatase (345 aa).

Fe cation is bound by residues His-215 and Glu-296.

It belongs to the ferrochelatase family.

It is found in the cytoplasm. It carries out the reaction heme b + 2 H(+) = protoporphyrin IX + Fe(2+). It participates in porphyrin-containing compound metabolism; protoheme biosynthesis; protoheme from protoporphyrin-IX: step 1/1. Its function is as follows. Catalyzes the ferrous insertion into protoporphyrin IX. This Nitrobacter hamburgensis (strain DSM 10229 / NCIMB 13809 / X14) protein is Ferrochelatase.